The chain runs to 267 residues: uncharacterized protein (267 aa).

Residues 2 to 198 (LGANGAGKTT…FRNKFIVIEG (197 aa)) enclose the ABC transporter domain. Residue 3–10 (GANGAGKT) participates in ATP binding.

The protein belongs to the ABC transporter superfamily.

This is an uncharacterized protein from Alkalihalophilus pseudofirmus (strain ATCC BAA-2126 / JCM 17055 / OF4) (Bacillus pseudofirmus).